The sequence spans 176 residues: Ribosome maturation factor RimM (176 aa).

In terms of domain architecture, PRC barrel spans 92 to 165 (EDEFLYSDLI…RLVVVPPVYA (74 aa)).

This sequence belongs to the RimM family. In terms of assembly, binds ribosomal protein uS19.

It localises to the cytoplasm. In terms of biological role, an accessory protein needed during the final step in the assembly of 30S ribosomal subunit, possibly for assembly of the head region. Essential for efficient processing of 16S rRNA. May be needed both before and after RbfA during the maturation of 16S rRNA. It has affinity for free ribosomal 30S subunits but not for 70S ribosomes. The chain is Ribosome maturation factor RimM from Paramagnetospirillum magneticum (strain ATCC 700264 / AMB-1) (Magnetospirillum magneticum).